We begin with the raw amino-acid sequence, 445 residues long: UPF0210 protein SMU_73 (445 aa).

Belongs to the UPF0210 family. In terms of assembly, homodimer.

This is UPF0210 protein SMU_73 from Streptococcus mutans serotype c (strain ATCC 700610 / UA159).